Consider the following 420-residue polypeptide: Forkhead box protein I3 (420 aa).

Disordered regions lie at residues 103–122 (GCSQ…SPAA), 234–306 (FRRK…GPML), and 364–396 (DTLQ…GQSS). Residues 108 to 122 (PFAQPAPAAPASPAA) show a composition bias toward low complexity. Phosphoserine is present on S119. Positions 145 to 239 (RPPYSYSALI…DNGNFRRKRK (95 aa)) form a DNA-binding region, fork-head. The Nuclear localization signal signature appears at 235–241 (RRKRKRR). Residues S277, S285, and S287 each carry the phosphoserine modification. Residues 294–306 (TKSTASSPGGPML) are compositionally biased toward polar residues. Residues 406 to 414 (SMVNSLIYP) carry the 9aaTAD motif.

Post-translationally, phosphorylation promotes the transcription factor activity. Dephosphorylation by protein phosphatase 2A (PP2A) reduces its activity.

The protein localises to the nucleus. Its function is as follows. Transcription factor required for pharyngeal arch development, which is involved in hair, ear, jaw and dental development. May act as a pioneer transcription factor during pharyngeal arch development. Required for epithelial cell differentiation within the epidermis. Acts at multiple stages of otic placode induction: necessary for preplacodal ectoderm to execute an inner ear program. Required for hair follicle stem cell specification. Acts downstream of TBX1 for the formation of the thymus and parathyroid glands from the third pharyngeal pouch. This chain is Forkhead box protein I3, found in Homo sapiens (Human).